A 184-amino-acid polypeptide reads, in one-letter code: ATP synthase subunit b, chloroplastic (184 aa).

A helical membrane pass occupies residues 27–49 (LATNLINLSVVLGVLVFFGKGVL).

The protein belongs to the ATPase B chain family. F-type ATPases have 2 components, F(1) - the catalytic core - and F(0) - the membrane proton channel. F(1) has five subunits: alpha(3), beta(3), gamma(1), delta(1), epsilon(1). F(0) has four main subunits: a(1), b(1), b'(1) and c(10-14). The alpha and beta chains form an alternating ring which encloses part of the gamma chain. F(1) is attached to F(0) by a central stalk formed by the gamma and epsilon chains, while a peripheral stalk is formed by the delta, b and b' chains.

Its subcellular location is the plastid. The protein localises to the chloroplast thylakoid membrane. Its function is as follows. F(1)F(0) ATP synthase produces ATP from ADP in the presence of a proton or sodium gradient. F-type ATPases consist of two structural domains, F(1) containing the extramembraneous catalytic core and F(0) containing the membrane proton channel, linked together by a central stalk and a peripheral stalk. During catalysis, ATP synthesis in the catalytic domain of F(1) is coupled via a rotary mechanism of the central stalk subunits to proton translocation. Functionally, component of the F(0) channel, it forms part of the peripheral stalk, linking F(1) to F(0). This chain is ATP synthase subunit b, chloroplastic, found in Cicer arietinum (Chickpea).